A 67-amino-acid polypeptide reads, in one-letter code: DNA gyrase inhibitor YacG (67 aa).

4 residues coordinate Zn(2+): C10, C13, C29, and C33.

The protein belongs to the DNA gyrase inhibitor YacG family. Interacts with GyrB. Zn(2+) is required as a cofactor.

Functionally, inhibits all the catalytic activities of DNA gyrase by preventing its interaction with DNA. Acts by binding directly to the C-terminal domain of GyrB, which probably disrupts DNA binding by the gyrase. The protein is DNA gyrase inhibitor YacG of Pasteurella multocida (strain Pm70).